A 929-amino-acid polypeptide reads, in one-letter code: Isoleucine--tRNA ligase (929 aa).

Positions 58-68 match the 'HIGH' region motif; it reads PYANGDIHIGH. Glu-563 is an L-isoleucyl-5'-AMP binding site. The 'KMSKS' region motif lies at 605–609; sequence KMSKS. Residue Lys-608 participates in ATP binding. Zn(2+) is bound by residues Cys-892, Cys-895, Cys-912, and Cys-915.

This sequence belongs to the class-I aminoacyl-tRNA synthetase family. IleS type 1 subfamily. Monomer. It depends on Zn(2+) as a cofactor.

The protein localises to the cytoplasm. It carries out the reaction tRNA(Ile) + L-isoleucine + ATP = L-isoleucyl-tRNA(Ile) + AMP + diphosphate. Functionally, catalyzes the attachment of isoleucine to tRNA(Ile). As IleRS can inadvertently accommodate and process structurally similar amino acids such as valine, to avoid such errors it has two additional distinct tRNA(Ile)-dependent editing activities. One activity is designated as 'pretransfer' editing and involves the hydrolysis of activated Val-AMP. The other activity is designated 'posttransfer' editing and involves deacylation of mischarged Val-tRNA(Ile). The sequence is that of Isoleucine--tRNA ligase from Neisseria meningitidis serogroup C / serotype 2a (strain ATCC 700532 / DSM 15464 / FAM18).